The primary structure comprises 946 residues: Bifunctional glutamine synthetase adenylyltransferase/adenylyl-removing enzyme (946 aa).

Residues 1-440 (MKPLSSPLQQ…VFNELIGDDE (440 aa)) are adenylyl removase. The segment at 449–946 (SEQWRELWQD…ASWQKWLVEE (498 aa)) is adenylyl transferase.

The protein belongs to the GlnE family. Requires Mg(2+) as cofactor.

It catalyses the reaction [glutamine synthetase]-O(4)-(5'-adenylyl)-L-tyrosine + phosphate = [glutamine synthetase]-L-tyrosine + ADP. The catalysed reaction is [glutamine synthetase]-L-tyrosine + ATP = [glutamine synthetase]-O(4)-(5'-adenylyl)-L-tyrosine + diphosphate. Its function is as follows. Involved in the regulation of glutamine synthetase GlnA, a key enzyme in the process to assimilate ammonia. When cellular nitrogen levels are high, the C-terminal adenylyl transferase (AT) inactivates GlnA by covalent transfer of an adenylyl group from ATP to specific tyrosine residue of GlnA, thus reducing its activity. Conversely, when nitrogen levels are low, the N-terminal adenylyl removase (AR) activates GlnA by removing the adenylyl group by phosphorolysis, increasing its activity. The regulatory region of GlnE binds the signal transduction protein PII (GlnB) which indicates the nitrogen status of the cell. The polypeptide is Bifunctional glutamine synthetase adenylyltransferase/adenylyl-removing enzyme (Escherichia coli O8 (strain IAI1)).